A 655-amino-acid polypeptide reads, in one-letter code: uncharacterized protein (655 aa).

Residues 1–23 (MKRTIKYLSFLGLIPFLSITTIS) form the signal peptide. Cysteine 24 carries the N-palmitoyl cysteine lipid modification. Residue cysteine 24 is the site of S-diacylglycerol cysteine attachment.

Belongs to the MG067/MG068/MG395 family.

Its subcellular location is the cell membrane. This is an uncharacterized protein from Mycoplasma capricolum subsp. capricolum (strain California kid / ATCC 27343 / NCTC 10154).